The sequence spans 396 residues: Flavohemoprotein (396 aa).

The 136-residue stretch at 1 to 136 (MLDAQTIATV…LANVFINREA (136 aa)) folds into the Globin domain. His-85 provides a ligand contact to heme b. Residues Tyr-95 and Glu-135 each act as charge relay system in the active site. The segment at 147–396 (GGWEGTRDFR…YECFGPHKVL (250 aa)) is reductase. Residues 150–255 (EGTRDFRIVA…VAPAGDFFMA (106 aa)) enclose the FAD-binding FR-type domain. FAD-binding positions include Tyr-188 and 204–207 (RQYS). 268 to 273 (GVGQTP) contributes to the NADP(+) binding site. 389-392 (CFGP) contacts FAD.

This sequence belongs to the globin family. Two-domain flavohemoproteins subfamily. In the C-terminal section; belongs to the flavoprotein pyridine nucleotide cytochrome reductase family. Heme b serves as cofactor. FAD is required as a cofactor.

It carries out the reaction 2 nitric oxide + NADPH + 2 O2 = 2 nitrate + NADP(+) + H(+). The catalysed reaction is 2 nitric oxide + NADH + 2 O2 = 2 nitrate + NAD(+) + H(+). Is involved in NO detoxification in an aerobic process, termed nitric oxide dioxygenase (NOD) reaction that utilizes O(2) and NAD(P)H to convert NO to nitrate, which protects the bacterium from various noxious nitrogen compounds. Therefore, plays a central role in the inducible response to nitrosative stress. The sequence is that of Flavohemoprotein from Escherichia coli O6:H1 (strain CFT073 / ATCC 700928 / UPEC).